A 355-amino-acid polypeptide reads, in one-letter code: Phenylalanine--tRNA ligase alpha subunit (355 aa).

Residue Glu273 coordinates Mg(2+).

This sequence belongs to the class-II aminoacyl-tRNA synthetase family. Phe-tRNA synthetase alpha subunit type 1 subfamily. Tetramer of two alpha and two beta subunits. Requires Mg(2+) as cofactor.

Its subcellular location is the cytoplasm. It carries out the reaction tRNA(Phe) + L-phenylalanine + ATP = L-phenylalanyl-tRNA(Phe) + AMP + diphosphate + H(+). The chain is Phenylalanine--tRNA ligase alpha subunit from Bifidobacterium longum (strain NCC 2705).